An 828-amino-acid chain; its full sequence is DNA gyrase subunit A (828 aa).

A Topo IIA-type catalytic domain is found at 32–497 (LPDVRDGLKP…EVLSLEDEDL (466 aa)). Residue Tyr-120 is the O-(5'-phospho-DNA)-tyrosine intermediate of the active site. The GyrA-box motif lies at 524–530 (QKRGGRG).

This sequence belongs to the type II topoisomerase GyrA/ParC subunit family. Heterotetramer, composed of two GyrA and two GyrB chains. In the heterotetramer, GyrA contains the active site tyrosine that forms a transient covalent intermediate with DNA, while GyrB binds cofactors and catalyzes ATP hydrolysis.

It localises to the cytoplasm. The catalysed reaction is ATP-dependent breakage, passage and rejoining of double-stranded DNA.. In terms of biological role, a type II topoisomerase that negatively supercoils closed circular double-stranded (ds) DNA in an ATP-dependent manner to modulate DNA topology and maintain chromosomes in an underwound state. Negative supercoiling favors strand separation, and DNA replication, transcription, recombination and repair, all of which involve strand separation. Also able to catalyze the interconversion of other topological isomers of dsDNA rings, including catenanes and knotted rings. Type II topoisomerases break and join 2 DNA strands simultaneously in an ATP-dependent manner. This chain is DNA gyrase subunit A, found in Streptococcus pyogenes serotype M1.